Reading from the N-terminus, the 283-residue chain is E3 ubiquitin-protein ligase MARCHF5 (283 aa).

An RING-CH-type zinc finger spans residues 9–78; the sequence is VQQMLDRSCW…PQCNAEYLIV (70 aa). Zn(2+) contacts are provided by cysteine 17, cysteine 20, cysteine 36, cysteine 38, histidine 46, cysteine 49, cysteine 68, and cysteine 71. Helical transmembrane passes span 102–122, 142–162, 212–232, and 241–261; these read FAAA…YGAV, PLFL…GKMI, ILCG…LMFS, and TILG…YFKQ.

The protein localises to the mitochondrion outer membrane. It localises to the endoplasmic reticulum membrane. The enzyme catalyses S-ubiquitinyl-[E2 ubiquitin-conjugating enzyme]-L-cysteine + [acceptor protein]-L-lysine = [E2 ubiquitin-conjugating enzyme]-L-cysteine + N(6)-ubiquitinyl-[acceptor protein]-L-lysine.. The protein operates within protein modification; protein ubiquitination. Its function is as follows. Mitochondrial E3 ubiquitin-protein ligase that plays a crucial role in the control of mitochondrial morphology by acting as a positive regulator of mitochondrial fission. May play a role in the prevention of cell senescence acting as a regulator of mitochondrial quality control. The protein is E3 ubiquitin-protein ligase MARCHF5 (marchf5) of Xenopus laevis (African clawed frog).